A 409-amino-acid polypeptide reads, in one-letter code: uncharacterized protein (409 aa).

A compositionally biased stretch (basic and acidic residues) spans 36–50 (HLKAKARAQESDSDR). Disordered stretches follow at residues 36–67 (HLKA…TFSS), 239–298 (IENT…SSTI), and 338–373 (RSQI…TGPR). Over residues 51–67 (PCSSIESSSEPASTFSS) the composition is skewed to low complexity. A compositionally biased stretch (basic and acidic residues) spans 245 to 265 (VREESNQEHPPGKQEKTEKHP). Over residues 268 to 281 (LQGSHQAEPETSSK) the composition is skewed to polar residues. Composition is skewed to basic and acidic residues over residues 282–294 (NSEE…KMDD) and 338–350 (RSQI…EGRR).

This is an uncharacterized protein from Homo sapiens (Human).